We begin with the raw amino-acid sequence, 163 residues long: Protein-export protein SecB (163 aa).

This sequence belongs to the SecB family. As to quaternary structure, homotetramer, a dimer of dimers. One homotetramer interacts with 1 SecA dimer.

The protein resides in the cytoplasm. In terms of biological role, one of the proteins required for the normal export of preproteins out of the cell cytoplasm. It is a molecular chaperone that binds to a subset of precursor proteins, maintaining them in a translocation-competent state. It also specifically binds to its receptor SecA. The sequence is that of Protein-export protein SecB from Brucella canis (strain ATCC 23365 / NCTC 10854 / RM-666).